Consider the following 48-residue polypeptide: MSAKMEILLFANLAHKSMFGMEPVTFASIGVTVGVQIVILLIWGLSWR.

Residues 25-47 (TFASIGVTVGVQIVILLIWGLSW) traverse the membrane as a helical segment.

The protein localises to the membrane. This is an uncharacterized protein from Archaeoglobus fulgidus (strain ATCC 49558 / DSM 4304 / JCM 9628 / NBRC 100126 / VC-16).